A 67-amino-acid chain; its full sequence is DNA-directed RNA polymerase subunit Rpo10 (67 aa).

C7, C10, C44, and C45 together coordinate Zn(2+).

The protein belongs to the archaeal Rpo10/eukaryotic RPB10 RNA polymerase subunit family. As to quaternary structure, part of the RNA polymerase complex. It depends on Zn(2+) as a cofactor.

Its subcellular location is the cytoplasm. The catalysed reaction is RNA(n) + a ribonucleoside 5'-triphosphate = RNA(n+1) + diphosphate. Functionally, DNA-dependent RNA polymerase (RNAP) catalyzes the transcription of DNA into RNA using the four ribonucleoside triphosphates as substrates. The chain is DNA-directed RNA polymerase subunit Rpo10 from Caldivirga maquilingensis (strain ATCC 700844 / DSM 13496 / JCM 10307 / IC-167).